A 463-amino-acid chain; its full sequence is Quinolone resistance protein NorB (463 aa).

14 consecutive transmembrane segments (helical) span residues 17-37 (IGIV…VNVV), 53-73 (IAVS…GGLA), 86-106 (IILN…LLLI), 107-127 (IGRL…LSII), 142-162 (YWSI…GAVA), 165-185 (LGWR…LFLI), 201-221 (FDIK…ILIT), 230-250 (SLLF…FIVL), 273-293 (TASN…NTFV), 299-319 (YSSL…LIMI), 334-354 (PMLI…LTFL), 357-377 (ILYV…LGIY), 403-423 (MASA…YAIV), and 435-455 (IALW…LLLV).

This sequence belongs to the major facilitator superfamily. TCR/Tet family.

Its subcellular location is the cell membrane. Its function is as follows. Multidrug efflux pump that acts independently of NorA and is one of the factors that confers resistance against diverse quinolones and chemical compounds. Can facilitate bacterial survival in vivo when overexpressed in an abscess and may contribute to the relative resistance of staphylococcal abscesses to antimicrobial therapy. The chain is Quinolone resistance protein NorB (norB) from Staphylococcus aureus (strain MW2).